A 144-amino-acid polypeptide reads, in one-letter code: 3-dehydroquinate dehydratase (144 aa).

The Proton acceptor role is filled by Y22. Residues N74, H80, and D87 each contribute to the substrate site. The active-site Proton donor is the H100. Substrate is bound by residues 101–102 and R111; that span reads LS.

The protein belongs to the type-II 3-dehydroquinase family. As to quaternary structure, homododecamer.

It carries out the reaction 3-dehydroquinate = 3-dehydroshikimate + H2O. It participates in metabolic intermediate biosynthesis; chorismate biosynthesis; chorismate from D-erythrose 4-phosphate and phosphoenolpyruvate: step 3/7. Catalyzes a trans-dehydration via an enolate intermediate. In Clostridium perfringens (strain ATCC 13124 / DSM 756 / JCM 1290 / NCIMB 6125 / NCTC 8237 / Type A), this protein is 3-dehydroquinate dehydratase.